Consider the following 326-residue polypeptide: Vitamin B12 import system permease protein BtuC (326 aa).

9 helical membrane passes run 15-35 (WLLS…CAGE), 61-81 (LAVL…QALF), 88-108 (PGLL…VLLG), 112-132 (LPGW…TLIL), 146-166 (LLAG…AIYF), 184-204 (GGVD…LIWI), 240-260 (GWMV…GLVI), 274-294 (VLLP…DVVA), and 302-322 (ELPI…WLLL).

Belongs to the binding-protein-dependent transport system permease family. FecCD subfamily. The complex is composed of two ATP-binding proteins (BtuD), two transmembrane proteins (BtuC) and a solute-binding protein (BtuF).

The protein localises to the cell inner membrane. Functionally, part of the ABC transporter complex BtuCDF involved in vitamin B12 import. Involved in the translocation of the substrate across the membrane. This chain is Vitamin B12 import system permease protein BtuC, found in Salmonella choleraesuis (strain SC-B67).